We begin with the raw amino-acid sequence, 571 residues long: Urease subunit alpha (571 aa).

Residues 134-571 (GAIDTHIHFI…LPMAQRYFLF (438 aa)) form the Urease domain. Positions 139, 141, and 222 each coordinate Ni(2+). At Lys-222 the chain carries N6-carboxylysine. His-224 serves as a coordination point for substrate. Ni(2+) is bound by residues His-251 and His-277. Catalysis depends on His-325, which acts as the Proton donor. Asp-365 serves as a coordination point for Ni(2+).

The protein belongs to the metallo-dependent hydrolases superfamily. Urease alpha subunit family. In terms of assembly, heterotrimer of UreA (gamma), UreB (beta) and UreC (alpha) subunits. Three heterotrimers associate to form the active enzyme. Ni cation serves as cofactor. Carboxylation allows a single lysine to coordinate two nickel ions.

It localises to the cytoplasm. The enzyme catalyses urea + 2 H2O + H(+) = hydrogencarbonate + 2 NH4(+). The protein operates within nitrogen metabolism; urea degradation; CO(2) and NH(3) from urea (urease route): step 1/1. In Bordetella parapertussis (strain 12822 / ATCC BAA-587 / NCTC 13253), this protein is Urease subunit alpha.